We begin with the raw amino-acid sequence, 338 residues long: DNA-directed RNA polymerase subunit alpha (338 aa).

The tract at residues 1–225 (MLISQRPTLT…ELFGLARELN (225 aa)) is alpha N-terminal domain (alpha-NTD). An alpha C-terminal domain (alpha-CTD) region spans residues 242–338 (YIAAYGMPIE…YIDTDPEETE (97 aa)). The disordered stretch occupies residues 314-338 (FDPTQLDGYDAATGDYIDTDPEETE).

The protein belongs to the RNA polymerase alpha chain family. As to quaternary structure, homodimer. The RNAP catalytic core consists of 2 alpha, 1 beta, 1 beta' and 1 omega subunit. When a sigma factor is associated with the core the holoenzyme is formed, which can initiate transcription.

The catalysed reaction is RNA(n) + a ribonucleoside 5'-triphosphate = RNA(n+1) + diphosphate. In terms of biological role, DNA-dependent RNA polymerase catalyzes the transcription of DNA into RNA using the four ribonucleoside triphosphates as substrates. The polypeptide is DNA-directed RNA polymerase subunit alpha (Corynebacterium diphtheriae (strain ATCC 700971 / NCTC 13129 / Biotype gravis)).